A 111-amino-acid polypeptide reads, in one-letter code: Pyrimidine/purine nucleoside phosphorylase 1 (111 aa).

It belongs to the nucleoside phosphorylase PpnP family.

The enzyme catalyses a purine D-ribonucleoside + phosphate = a purine nucleobase + alpha-D-ribose 1-phosphate. It carries out the reaction adenosine + phosphate = alpha-D-ribose 1-phosphate + adenine. It catalyses the reaction cytidine + phosphate = cytosine + alpha-D-ribose 1-phosphate. The catalysed reaction is guanosine + phosphate = alpha-D-ribose 1-phosphate + guanine. The enzyme catalyses inosine + phosphate = alpha-D-ribose 1-phosphate + hypoxanthine. It carries out the reaction thymidine + phosphate = 2-deoxy-alpha-D-ribose 1-phosphate + thymine. It catalyses the reaction uridine + phosphate = alpha-D-ribose 1-phosphate + uracil. The catalysed reaction is xanthosine + phosphate = alpha-D-ribose 1-phosphate + xanthine. Its function is as follows. Catalyzes the phosphorolysis of diverse nucleosides, yielding D-ribose 1-phosphate and the respective free bases. Can use uridine, adenosine, guanosine, cytidine, thymidine, inosine and xanthosine as substrates. Also catalyzes the reverse reactions. In Psychrobacter cryohalolentis (strain ATCC BAA-1226 / DSM 17306 / VKM B-2378 / K5), this protein is Pyrimidine/purine nucleoside phosphorylase 1.